Reading from the N-terminus, the 108-residue chain is MHTLLLLAALSNQITFITTQQGDIYTVIPQVILSEPCVCQVQILSVRNGTWGQSHTQQKQTLSLPANQPIELSRLSVNISSEDSVKIILTVSNGQSLHLSQQWPSSAR.

The signal sequence occupies residues 1–8; that stretch reads MHTLLLLA.

Belongs to the CsgC/AgfC family.

The protein resides in the periplasm. Its function is as follows. Plays a role in the extracellular assembly of CsgA into thin aggregative fimbriae (Tafi) fibers. Assembly may also require CsgE. Tafi are thought to be assembled via an extracellular nucleation-precipitation (ENP) pathway, and possibly also via an intracellular non-CsgC-dependent pathway. In Salmonella arizonae (strain ATCC BAA-731 / CDC346-86 / RSK2980), this protein is Curli assembly protein CsgC.